We begin with the raw amino-acid sequence, 261 residues long: Neurexophilin-2 (261 aa).

The N-terminal stretch at 1 to 22 (MSLRPLPLLVVPGLLQLLFCDS) is a signal peptide. The interval 23–87 (EEVIHNTESV…WDWLANITEI (65 aa)) is II. N-linked (GlcNAc...) asparagine glycosylation is found at asparagine 83, asparagine 136, asparagine 146, and asparagine 152. The tract at residues 88-166 (QEQLARTKRR…LVPPSKVVEF (79 aa)) is III. The tract at residues 167–175 (EISPQSTLE) is IV (linker domain). Positions 176–261 (TKESKSFNCH…HSETPYLSFG (86 aa)) are v (Cys-rich).

This sequence belongs to the neurexophilin family. In terms of processing, may be proteolytically processed at the boundary between the N-terminal non-conserved and the central conserved domain in neuron-like cells.

Its subcellular location is the secreted. May be signaling molecules that resemble neuropeptides and that act by binding to alpha-neurexins and possibly other receptors. The chain is Neurexophilin-2 (Nxph2) from Mus musculus (Mouse).